The following is a 257-amino-acid chain: Major prion protein (257 aa).

An N-terminal signal peptide occupies residues 1–24; the sequence is MVKSHIGSWLLVLFVATWSDIGFC. An interaction with GRB2, ERI3 and SYN1 region spans residues 25 to 234; it reads KKRPKPGGGW…ESEAYYQRGA (210 aa). The interval 27–114 is disordered; sequence RPKPGGGWNT…KPSKPKTNMK (88 aa). 5 tandem repeats follow at residues 54–62, 63–70, 71–78, 79–86, and 87–95. Residues 54 to 95 are 5 X 8 AA tandem repeats of P-H-G-G-G-W-G-Q; that stretch reads PQGGGGWGQPHGGGWGQPHGGGWGQPHGGGWGQPHGGGGWGQ. A compositionally biased stretch (gly residues) spans 55–101; that stretch reads QGGGGWGQPHGGGWGQPHGGGWGQPHGGGWGQPHGGGGWGQGGGSHG. Cu(2+) contacts are provided by His-64, Gly-65, Gly-66, His-72, Gly-73, Gly-74, His-80, Gly-81, Gly-82, His-88, Gly-90, and Gly-91. Cys-183 and Cys-218 form a disulfide bridge. N-linked (GlcNAc...) asparagine glycosylation is found at Asn-185 and Asn-201. Residue Ala-234 is the site of GPI-anchor amidated alanine attachment. Positions 235 to 257 are cleaved as a propeptide — removed in mature form; the sequence is SAILFSPPPVILLISLLILLIVG.

The protein belongs to the prion family. Monomer and homodimer. Has a tendency to aggregate into amyloid fibrils containing a cross-beta spine, formed by a steric zipper of superposed beta-strands. Soluble oligomers may represent an intermediate stage on the path to fibril formation. Copper binding may promote oligomerization. Interacts with GRB2, APP, ERI3/PRNPIP and SYN1. Mislocalized cytosolically exposed PrP interacts with MGRN1; this interaction alters MGRN1 subcellular location and causes lysosomal enlargement. Interacts with KIAA1191.

It is found in the cell membrane. The protein localises to the golgi apparatus. In terms of biological role, its primary physiological function is unclear. Has cytoprotective activity against internal or environmental stresses. May play a role in neuronal development and synaptic plasticity. May be required for neuronal myelin sheath maintenance. May play a role in iron uptake and iron homeostasis. Soluble oligomers are toxic to cultured neuroblastoma cells and induce apoptosis (in vitro). Association with GPC1 (via its heparan sulfate chains) targets PRNP to lipid rafts. Also provides Cu(2+) or Zn(2+) for the ascorbate-mediated GPC1 deaminase degradation of its heparan sulfate side chains. The polypeptide is Major prion protein (PRNP) (Mustela putorius furo (European domestic ferret)).